We begin with the raw amino-acid sequence, 405 residues long: Mitochondrial outer membrane protein SLC25A46 (405 aa).

The tract at residues 1-77 is disordered; the sequence is MTSRRPDSFE…PDEAQSAAPP (77 aa). The span at 22–37 shows a compositional bias: low complexity; it reads FSGGYSGRSFNNSSSS. A Solcar 1 repeat occupies 80 to 171; sequence QLNRFAGFGI…GIISECTPLP (92 aa). The next 6 membrane-spanning stretches (helical) occupy residues 87 to 107, 151 to 171, 183 to 203, 242 to 262, 302 to 322, and 371 to 391; these read FGIG…CIVF, FVVQ…TPLP, VVGH…FYSA, LLPL…HYII, FPEL…LFPL, and MGFY…ATVL. The Solcar 2 repeat unit spans residues 299–401; the sequence is DAYFPELMAS…QITKMIYSTL (103 aa).

Belongs to the mitochondrial carrier (TC 2.A.29) family.

It is found in the mitochondrion outer membrane. Functionally, transmembrane protein of the mitochondrial outer membrane that controls mitochondrial organization. May regulate the biogenesis and dynamics of mitochondrial cristae, the inwards folds of the inner mitochondrial membrane. Could regulate mitochondrial lipid homeostasis and thereby mitochondrial fission. This Danio rerio (Zebrafish) protein is Mitochondrial outer membrane protein SLC25A46 (slc25a46).